The sequence spans 532 residues: Glucose-6-phosphate isomerase (532 aa).

Catalysis depends on Glu330, which acts as the Proton donor. Active-site residues include His359 and Lys461.

This sequence belongs to the GPI family.

It is found in the cytoplasm. It carries out the reaction alpha-D-glucose 6-phosphate = beta-D-fructose 6-phosphate. It functions in the pathway carbohydrate biosynthesis; gluconeogenesis. It participates in carbohydrate degradation; glycolysis; D-glyceraldehyde 3-phosphate and glycerone phosphate from D-glucose: step 2/4. In terms of biological role, catalyzes the reversible isomerization of glucose-6-phosphate to fructose-6-phosphate. The chain is Glucose-6-phosphate isomerase from Synechococcus sp. (strain CC9902).